The following is a 170-amino-acid chain: Protein Rex (170 aa).

Residues 1–16 (MPKTRRQRTRRARRNR) are compositionally biased toward basic residues. Disordered regions lie at residues 1–27 (MPKT…SQDL) and 69–170 (VQST…GEKP). The short motif at 2-19 (PKTRRQRTRRARRNRPPT) is the Nuclear localization signal, and RNA-binding (RxRE) element. The tract at residues 57 to 71 (PPAYIDMPSWPPVQS) is homomultimerization. The span at 82–95 (ALSALLSNTLSLAS) shows a compositional bias: low complexity. The Nuclear export signal signature appears at 83-94 (LSALLSNTLSLA). Residues 124 to 132 (PSFNQCEST) form a homomultimerization region. A compositionally biased stretch (low complexity) spans 143–160 (PSGISSPPSPSPNLASVP). Phosphoserine; by host is present on residues S151 and S153. The span at 161 to 170 (KTSTPPGEKP) shows a compositional bias: polar residues.

Belongs to the deltaretrovirus Rex protein family. In terms of assembly, homomultimer. In terms of processing, phosphorylation is essential for RNA-binding and function.

It is found in the host nucleus. Its subcellular location is the host nucleolus. It localises to the host cytoplasm. Functionally, rex escorts unspliced gag-pro-pol and singly spliced env mRNAs out of the nucleus of infected cells. These mRNAs carry a recognition sequence called Rex responsive element (RxRE or XRE) located at the 3' region of the long terminal repeat (LTR). This function is essential since most HTLV proteins are translated from unspliced or partially spliced pre-mRNAs that cannot exit the nucleus by the pathway used by fully processed cellular mRNAs. This chain is Protein Rex, found in Human T-cell leukemia virus 2 (HTLV-2).